We begin with the raw amino-acid sequence, 474 residues long: Solute carrier family 49 member A3 (474 aa).

The segment at Met1–Arg20 is disordered. Transmembrane regions (helical) follow at residues Trp38–Phe58, Leu69–Val89, Cys105–Leu126, Val134–Phe154, Leu175–Val195, Leu201–Leu221, Trp258–Leu278, Gly290–Leu310, Ile326–Ala346, Val349–Gly369, Leu388–Ala408, and Val428–Phe448.

Belongs to the major facilitator superfamily.

The protein localises to the membrane. This is Solute carrier family 49 member A3 (slc49a3) from Danio rerio (Zebrafish).